Consider the following 732-residue polypeptide: 1,4-alpha-glucan branching enzyme GlgB (732 aa).

Asp408 functions as the Nucleophile in the catalytic mechanism. Glu461 acts as the Proton donor in catalysis.

It belongs to the glycosyl hydrolase 13 family. GlgB subfamily. As to quaternary structure, monomer.

The enzyme catalyses Transfers a segment of a (1-&gt;4)-alpha-D-glucan chain to a primary hydroxy group in a similar glucan chain.. It participates in glycan biosynthesis; glycogen biosynthesis. In terms of biological role, catalyzes the formation of the alpha-1,6-glucosidic linkages in glycogen by scission of a 1,4-alpha-linked oligosaccharide from growing alpha-1,4-glucan chains and the subsequent attachment of the oligosaccharide to the alpha-1,6 position. The polypeptide is 1,4-alpha-glucan branching enzyme GlgB (Rhodococcus jostii (strain RHA1)).